The primary structure comprises 499 residues: Probable aspartyl protease At4g16563 (499 aa).

Positions 1-26 are cleaved as a signal peptide; sequence MKTCLIFFLYTTILQYYFHFSVSSLS. Positions 83 to 487 constitute a Peptidase A1 domain; it reads YLISLSVGSS…DLLNRRVGFA (405 aa). Residue Asp-101 is part of the active site. Cys-111 and Cys-119 are joined by a disulfide. 2 N-linked (GlcNAc...) asparagine glycosylation sites follow: Asn-175 and Asn-211. Asp-353 is an active-site residue. An intrachain disulfide couples Cys-396 to Cys-445. 2 N-linked (GlcNAc...) asparagine glycosylation sites follow: Asn-400 and Asn-415.

The protein belongs to the peptidase A1 family.

This is Probable aspartyl protease At4g16563 from Arabidopsis thaliana (Mouse-ear cress).